The sequence spans 166 residues: Large ribosomal subunit protein uL11 (166 aa).

Arg-67 is subject to N5-methylarginine.

Belongs to the universal ribosomal protein uL11 family.

The protein is Large ribosomal subunit protein uL11 (RPL12) of Encephalitozoon cuniculi (strain GB-M1) (Microsporidian parasite).